Here is a 402-residue protein sequence, read N- to C-terminus: Protein indeterminate-domain 12 (402 aa).

The disordered stretch occupies residues 47–66 (TETHKPKKKRGLPGNPDPDA). Ser-72 bears the Phosphoserine mark. C2H2-type zinc fingers lie at residues 82 to 104 (FVCE…RRGH) and 124 to 154 (YVCP…CRKH). A Nuclear localization signal motif is present at residues 146-153 (IKKHFCRK). The C2H2-type 2; degenerate zinc-finger motif lies at 159–183 (WKCEKCSKFYAVQSDWKAHTKICGT). The Zn(2+) site is built by Cys-161, Cys-164, His-177, Cys-181, Cys-188, Cys-190, His-203, and Cys-207. The CCHC-type 2; atypical zinc finger occupies 186-209 (YRCDCGTLFSRKDTFITHRAFCDA). An SHR-binding region spans residues 196-208 (RKDTFITHRAFCD).

The protein localises to the nucleus. Its function is as follows. Probable transcription factor. In Arabidopsis thaliana (Mouse-ear cress), this protein is Protein indeterminate-domain 12.